The sequence spans 219 residues: 7-cyano-7-deazaguanine synthase (219 aa).

An ATP-binding site is contributed by 11–21; sequence FSGGQDSTTCL. Zn(2+) contacts are provided by Cys-188, Cys-196, Cys-199, and Cys-202.

Belongs to the QueC family. It depends on Zn(2+) as a cofactor.

The enzyme catalyses 7-carboxy-7-deazaguanine + NH4(+) + ATP = 7-cyano-7-deazaguanine + ADP + phosphate + H2O + H(+). It participates in purine metabolism; 7-cyano-7-deazaguanine biosynthesis. Functionally, catalyzes the ATP-dependent conversion of 7-carboxy-7-deazaguanine (CDG) to 7-cyano-7-deazaguanine (preQ(0)). The chain is 7-cyano-7-deazaguanine synthase from Glaesserella parasuis serovar 5 (strain SH0165) (Haemophilus parasuis).